The chain runs to 34 residues: Endoglucanase 1 (34 aa).

The catalysed reaction is Endohydrolysis of (1-&gt;4)-beta-D-glucosidic linkages in cellulose, lichenin and cereal beta-D-glucans.. The sequence is that of Endoglucanase 1 from Sclerotinia sclerotiorum (White mold).